Here is a 598-residue protein sequence, read N- to C-terminus: Nuclear receptor subfamily 4 group A member 2 (598 aa).

The tract at residues 1 to 22 (MPCVQAQYGSSPQGASPASQSY) is disordered. The span at 8–22 (YGSSPQGASPASQSY) shows a compositional bias: low complexity. Positions 260–335 (EGLCAVCGDN…VGMVKEVVRT (76 aa)) form a DNA-binding region, nuclear receptor. NR C4-type zinc fingers lie at residues 263–283 (CAVC…CEGC) and 299–323 (CLAN…FQKC). The Bipartite nuclear localization signal (NLS1) motif lies at 287–314 (FKRTVQKNAKYVCLANKNCPVDKRRRNR). The interval 337–361 (SLKGRRGRLPSKPKSPQDPSPPSPP) is disordered. Residues 338-350 (LKGRRGRLPSKPK) carry the Nuclear localization signal (NLS1) motif. Residues 352–361 (PQDPSPPSPP) are compositionally biased toward pro residues. An NR LBD domain is found at 360 to 595 (PPVSLISALV…AIIDKLFLDT (236 aa)). The nuclear export sequence (NES1) motif lies at 443–452 (FLELFVLRLA). The short motif at 568–577 (QGLQRIFYLK) is the nuclear export sequence (NES2) element.

The protein belongs to the nuclear hormone receptor family. NR4 subfamily. In terms of assembly, interacts with SFPQ, NCOR2, SIN3A and HADC1. The interaction with NCOR2 increases in the absence of PITX3. Interacts with PER2. As to expression, shows a ubiquitous distribution in the cerebral cortex, hippocampus, thalamus, amygdala, and midbrain. Expression increases in prenatally stressed adult offspring in the ventral tegmental area, whereas no changes are observed in the substantia nigra area (at protein level). Not expressed in quiescent liver but is rapidly induced following partial hepatectomy and is specific to hepatic growth as it is not induced in other mitogen-treated cells. Expressed at very low levels in the lung, spleen and stomach and at high levels in the brain.

It is found in the cytoplasm. The protein localises to the nucleus. Transcriptional regulator which is important for the differentiation and maintenance of meso-diencephalic dopaminergic (mdDA) neurons during development. It is crucial for expression of a set of genes such as SLC6A3, SLC18A2, TH and DRD2 which are essential for development of mdDA neurons. May confer liver-specific regulation of delayed-early genes induced later in the G1 phase of regeneration along with NR4A1. In Rattus norvegicus (Rat), this protein is Nuclear receptor subfamily 4 group A member 2 (Nr4a2).